The chain runs to 387 residues: Ubiquitin-conjugating enzyme E2 25 (387 aa).

The tract at residues 117-164 (APPVRDDIDEGRGSDISDTTSEPIDDDMAGDGEVDDDDEEEEDDEDAD) is disordered. The span at 120 to 131 (VRDDIDEGRGSD) shows a compositional bias: basic and acidic residues. A compositionally biased stretch (acidic residues) spans 139 to 164 (PIDDDMAGDGEVDDDDEEEEDDEDAD). The UBC core domain occupies 214-380 (TATDRLMKEI…QQIHAKSGWY (167 aa)). Catalysis depends on Cys-315, which acts as the Glycyl thioester intermediate.

It belongs to the ubiquitin-conjugating enzyme family. As to expression, in the embryo, expressed in precursor neuron and muscle cells and in other cells such as hypodermal cells. After hatching of L1 larvae and in all subsequent stages, strongest expression in pharyngeal muscle and anal muscle cells. In L4 larvae and adolescent hermaphrodites, also expressed in the vulval muscles. Expression also detected in all four nerve cords and in neurons with weaker levels in all body wall muscles.

It is found in the cytoplasm. The protein resides in the nucleus. It catalyses the reaction S-ubiquitinyl-[E1 ubiquitin-activating enzyme]-L-cysteine + [E2 ubiquitin-conjugating enzyme]-L-cysteine = [E1 ubiquitin-activating enzyme]-L-cysteine + S-ubiquitinyl-[E2 ubiquitin-conjugating enzyme]-L-cysteine.. It functions in the pathway protein modification; protein ubiquitination. In terms of biological role, catalyzes the covalent attachment of ubiquitin to other proteins (Potential). Required for the maintenance of neuromuscular function. The chain is Ubiquitin-conjugating enzyme E2 25 from Caenorhabditis elegans.